Consider the following 307-residue polypeptide: Probable aspartoacylase (307 aa).

Zn(2+) is bound by residues His13 and Glu16. Substrate-binding positions include Arg55 and 62 to 63 (NR). His105 serves as a coordination point for Zn(2+). Residues Glu163 and Tyr276 each contribute to the substrate site.

This sequence belongs to the AspA/AstE family. Aspartoacylase subfamily. The cofactor is Zn(2+).

It carries out the reaction an N-acyl-L-aspartate + H2O = a carboxylate + L-aspartate. In Prochlorococcus marinus (strain SARG / CCMP1375 / SS120), this protein is Probable aspartoacylase.